A 384-amino-acid chain; its full sequence is Brix domain-containing protein F44G4.1 (384 aa).

Disordered regions lie at residues 1 to 58 (MAPK…KVVK) and 82 to 135 (SKAT…PQKE). A compositionally biased stretch (acidic residues) spans 18-48 (FVEEEVTGDVDEDGFEQAEDMPDEVDSDEDE). Residues 96–114 (LPKSQRGKALKRALRKDKR) are compositionally biased toward basic residues. A compositionally biased stretch (basic and acidic residues) spans 115–127 (ARQGERAQIRDEL). Residues 177 to 360 (PKVMITMTPK…LKWLQKGTFD (184 aa)) form the Brix domain.

The sequence is that of Brix domain-containing protein F44G4.1 from Caenorhabditis elegans.